A 402-amino-acid chain; its full sequence is Putative PDZ domain-containing protein PDZK1P1 (402 aa).

PDZ domains follow at residues 12-93 (RLCY…VDKE) and 121-206 (IVEM…VDKE). The tract at residues 230–258 (GSVKEAPAPTPTSLEVSSPPDTTEEEDHK) is disordered. Residues 240 to 250 (PTSLEVSSPPD) are compositionally biased toward polar residues. The region spanning 261-341 (LCRLAKGENG…NVTLLVCGKK (81 aa)) is the PDZ 3 domain. A disordered region spans residues 362–402 (DTPPDSKEGIVVESKHDSHMAKERAHSTASHSSSNSEDTEM). The segment covering 365-387 (PDSKEGIVVESKHDSHMAKERAH) has biased composition (basic and acidic residues). Low complexity predominate over residues 388–402 (STASHSSSNSEDTEM).

Belongs to the NHER family.

The polypeptide is Putative PDZ domain-containing protein PDZK1P1 (Homo sapiens (Human)).